The primary structure comprises 582 residues: Threonine--tRNA ligase (582 aa).

Residues 185-478 are catalytic; sequence DHRKLGKELD…LVEHYGGAFP (294 aa). Zn(2+) contacts are provided by Cys278, His329, and His455.

It belongs to the class-II aminoacyl-tRNA synthetase family. In terms of assembly, homodimer. Zn(2+) serves as cofactor.

The protein resides in the cytoplasm. It carries out the reaction tRNA(Thr) + L-threonine + ATP = L-threonyl-tRNA(Thr) + AMP + diphosphate + H(+). Its function is as follows. Catalyzes the attachment of threonine to tRNA(Thr) in a two-step reaction: L-threonine is first activated by ATP to form Thr-AMP and then transferred to the acceptor end of tRNA(Thr). Also edits incorrectly charged L-seryl-tRNA(Thr). This is Threonine--tRNA ligase from Borrelia garinii subsp. bavariensis (strain ATCC BAA-2496 / DSM 23469 / PBi) (Borreliella bavariensis).